Here is a 147-residue protein sequence, read N- to C-terminus: Hemoglobin subunit gamma-1 (147 aa).

The residue at position 2 (G2) is an N-acetylglycine. One can recognise a Globin domain in the interval 3 to 147 (HFTEEDKATI…VASALSSRYH (145 aa)). T13 carries the phosphothreonine modification. Phosphoserine occurs at positions 45, 51, and 53. K60 is modified (N6-acetyllysine). A heme b-binding site is contributed by H64. K83 is subject to N6-acetyllysine. Residue H93 coordinates heme b. Residue C94 is modified to S-nitrosocysteine. A Phosphoserine modification is found at S140.

It belongs to the globin family. Heterotetramer of two alpha chains and two gamma chains in fetal hemoglobin (Hb F). In terms of tissue distribution, red blood cells.

Gamma chains make up the fetal hemoglobin F, in combination with alpha chains. This Gorilla gorilla gorilla (Western lowland gorilla) protein is Hemoglobin subunit gamma-1 (HBG1).